Consider the following 116-residue polypeptide: uncharacterized protein (116 aa).

The helical transmembrane segment at 52–72 (VFCSANSVPLYLLLLTSALHF) threads the bilayer.

It localises to the mitochondrion membrane. This is an uncharacterized protein from Arabidopsis thaliana (Mouse-ear cress).